Here is an 84-residue protein sequence, read N- to C-terminus: U4-theraphotoxin-Hhn1aa (84 aa).

An N-terminal signal peptide occupies residues 1–22 (MKVTLIAILTCAAVLVLHTTAA). The propeptide occupies 23–47 (EELEESQLMEVGMPDTELAAVDEER). 2 cysteine pairs are disulfide-bonded: cysteine 51–cysteine 65 and cysteine 55–cysteine 76.

Belongs to the neurotoxin 12 (Hwtx-2) family. 02 (Hwtx-2) subfamily. As to expression, expressed by the venom gland.

The protein localises to the secreted. Functionally, postsynaptic neurotoxin. The sequence is that of U4-theraphotoxin-Hhn1aa from Cyriopagopus hainanus (Chinese bird spider).